Here is a 602-residue protein sequence, read N- to C-terminus: DNA ligase (602 aa).

Glutamate 262 contributes to the ATP binding site. The active-site N6-AMP-lysine intermediate is the lysine 264. The ATP site is built by arginine 269, arginine 284, glutamate 314, phenylalanine 354, arginine 431, and lysine 437.

It belongs to the ATP-dependent DNA ligase family. In terms of assembly, monomer. The cofactor is Mg(2+). Mn(2+) is required as a cofactor.

The catalysed reaction is ATP + (deoxyribonucleotide)n-3'-hydroxyl + 5'-phospho-(deoxyribonucleotide)m = (deoxyribonucleotide)n+m + AMP + diphosphate.. It carries out the reaction ADP + (deoxyribonucleotide)n-3'-hydroxyl + 5'-phospho-(deoxyribonucleotide)m = (deoxyribonucleotide)n+m + AMP + phosphate.. The enzyme catalyses GTP + (deoxyribonucleotide)n-3'-hydroxyl + 5'-phospho-(deoxyribonucleotide)m = (deoxyribonucleotide)n+m + GMP + diphosphate.. Its activity is regulated as follows. Inhibited in the presence of 100 mM KCl, NaCl or NH(4)Cl. Functionally, DNA ligase that seals nicks in double-stranded DNA during DNA replication, DNA recombination and DNA repair. Can also use ADP, but not NAD(+). This chain is DNA ligase, found in Aeropyrum pernix (strain ATCC 700893 / DSM 11879 / JCM 9820 / NBRC 100138 / K1).